The chain runs to 240 residues: Phosphoribosylaminoimidazole-succinocarboxamide synthase (240 aa).

This sequence belongs to the SAICAR synthetase family.

It catalyses the reaction 5-amino-1-(5-phospho-D-ribosyl)imidazole-4-carboxylate + L-aspartate + ATP = (2S)-2-[5-amino-1-(5-phospho-beta-D-ribosyl)imidazole-4-carboxamido]succinate + ADP + phosphate + 2 H(+). It participates in purine metabolism; IMP biosynthesis via de novo pathway; 5-amino-1-(5-phospho-D-ribosyl)imidazole-4-carboxamide from 5-amino-1-(5-phospho-D-ribosyl)imidazole-4-carboxylate: step 1/2. The sequence is that of Phosphoribosylaminoimidazole-succinocarboxamide synthase from Neorickettsia sennetsu (strain ATCC VR-367 / Miyayama) (Ehrlichia sennetsu).